We begin with the raw amino-acid sequence, 314 residues long: tRNA dimethylallyltransferase (314 aa).

12–19 contacts ATP; sequence GPTAAGKS. Position 14 to 19 (14 to 19) interacts with substrate; that stretch reads TAAGKS. Interaction with substrate tRNA regions lie at residues 37–40, 161–165, and 245–250; these read DSAT, QRIQR, and RCVGYR.

This sequence belongs to the IPP transferase family. In terms of assembly, monomer. Mg(2+) is required as a cofactor.

The enzyme catalyses adenosine(37) in tRNA + dimethylallyl diphosphate = N(6)-dimethylallyladenosine(37) in tRNA + diphosphate. Catalyzes the transfer of a dimethylallyl group onto the adenine at position 37 in tRNAs that read codons beginning with uridine, leading to the formation of N6-(dimethylallyl)adenosine (i(6)A). The sequence is that of tRNA dimethylallyltransferase from Bordetella petrii (strain ATCC BAA-461 / DSM 12804 / CCUG 43448).